Consider the following 475-residue polypeptide: GlcNAc-binding protein A (475 aa).

An N-terminal signal peptide occupies residues 1–27 (MPKLTQLSLVTLALTAGSTLVSQTASA). The Chitin-binding type-4 domain occupies 28–195 (HGYVVSPESR…SFYNAIDVNF (168 aa)). In terms of domain architecture, Chitin-binding type-3 spans 426–468 (AGTKVLQPKTGKVYQCKPWPYNGYCVQWSPTATGFEPGIGNSW).

The protein belongs to the GbpA family.

It is found in the secreted. In terms of biological role, probably interacts with GlcNAc residues. May promote attachment to both epithelial cell surfaces and chitin. This chain is GlcNAc-binding protein A, found in Shewanella oneidensis (strain ATCC 700550 / JCM 31522 / CIP 106686 / LMG 19005 / NCIMB 14063 / MR-1).